Consider the following 335-residue polypeptide: MATLMDKLITSVAPPSTKPNNKVTVVGVGQVGMACAISILEKGLCDELALVDVVEDKLKGEMMDLQHGSLFLNTHKIVADKDYSVTANSKVVVVTAGVRQQEGESRLDLVQRNVNVFKFIIPQVVKHSPDCIILVVSNPVDILTYVTWKLSGLPKHRVIGSGCNLDSARFRFLMAEKLGVHPTSCHGWILGEHGDSSVAVWSGVNVAGVSLQEMNPAMGSDQDPESWKQVHKQVVDSAYEVIKLKGYTNWAIGMSVADLLETILKNLCRVHPVSTMVKGMYGIENEVFLSLPCVLGSAGLTSVINQKLKDNEVAQLQNSATTLWNVQKDIKDLKS.

NAD(+) is bound by residues 29-57 (GQVGMACAISILEKGLCDELALVDVVEDK) and arginine 99. Substrate contacts are provided by arginine 106, asparagine 138, and arginine 169. Asparagine 138 serves as a coordination point for NAD(+). The active-site Proton acceptor is the histidine 193. Residue threonine 248 coordinates substrate.

It belongs to the LDH/MDH superfamily. LDH family. Homotetramer.

The protein resides in the cytoplasm. It carries out the reaction (S)-lactate + NAD(+) = pyruvate + NADH + H(+). Its pathway is fermentation; pyruvate fermentation to lactate; (S)-lactate from pyruvate: step 1/1. Its function is as follows. Interconverts simultaneously and stereospecifically pyruvate and lactate with concomitant interconversion of NADH and NAD(+). This is L-lactate dehydrogenase B chain (LDHB) from Sceloporus undulatus (Eastern fence lizard).